The sequence spans 510 residues: NAD(P)H-quinone oxidoreductase subunit 2 B, chloroplastic (510 aa).

13 helical membrane passes run 24–44 (LLLF…GLIL), 57–77 (IPWL…SLLF), 99–119 (IFQF…VEYI), 124–144 (MAIT…MFLC), 149–169 (LITI…LSGY), 183–203 (YLLM…WLYG), 227–247 (PGIS…LSPA), 295–315 (WHLL…LIAI), 323–343 (MLAY…IVGD), 354–374 (YMLF…LFGL), 395–415 (ALSL…AGFF), 418–438 (LYLF…IGLL), and 484–504 (MIVC…IIAI).

It belongs to the complex I subunit 2 family. In terms of assembly, NDH is composed of at least 16 different subunits, 5 of which are encoded in the nucleus.

It is found in the plastid. Its subcellular location is the chloroplast thylakoid membrane. It carries out the reaction a plastoquinone + NADH + (n+1) H(+)(in) = a plastoquinol + NAD(+) + n H(+)(out). It catalyses the reaction a plastoquinone + NADPH + (n+1) H(+)(in) = a plastoquinol + NADP(+) + n H(+)(out). Functionally, NDH shuttles electrons from NAD(P)H:plastoquinone, via FMN and iron-sulfur (Fe-S) centers, to quinones in the photosynthetic chain and possibly in a chloroplast respiratory chain. The immediate electron acceptor for the enzyme in this species is believed to be plastoquinone. Couples the redox reaction to proton translocation, and thus conserves the redox energy in a proton gradient. In Lactuca sativa (Garden lettuce), this protein is NAD(P)H-quinone oxidoreductase subunit 2 B, chloroplastic.